A 178-amino-acid chain; its full sequence is CDP-archaeol synthase (178 aa).

Transmembrane regions (helical) follow at residues 3-23 (IIYL…ANAT), 55-75 (TFFG…IFNL), 91-111 (GIVG…GSFI), 125-145 (ILDQ…FAPV), and 149-169 (MGIF…IIAY).

The protein belongs to the CDP-archaeol synthase family. Mg(2+) serves as cofactor.

It is found in the cell membrane. It catalyses the reaction 2,3-bis-O-(geranylgeranyl)-sn-glycerol 1-phosphate + CTP + H(+) = CDP-2,3-bis-O-(geranylgeranyl)-sn-glycerol + diphosphate. It participates in membrane lipid metabolism; glycerophospholipid metabolism. Functionally, catalyzes the formation of CDP-2,3-bis-(O-geranylgeranyl)-sn-glycerol (CDP-archaeol) from 2,3-bis-(O-geranylgeranyl)-sn-glycerol 1-phosphate (DGGGP) and CTP. This reaction is the third ether-bond-formation step in the biosynthesis of archaeal membrane lipids. This is CDP-archaeol synthase from Methanococcus aeolicus (strain ATCC BAA-1280 / DSM 17508 / OCM 812 / Nankai-3).